Reading from the N-terminus, the 170-residue chain is Acetyl-CoA decarbonylase/synthase complex subunit epsilon 2 (170 aa).

The protein belongs to the CdhB family. In terms of assembly, heterotetramer of two alpha and two epsilon subunits. The ACDS complex is made up of alpha, epsilon, beta, gamma and delta subunits with a probable stoichiometry of (alpha(2)epsilon(2))(4)-beta(8)-(gamma(1)delta(1))(8).

The protein operates within one-carbon metabolism; methanogenesis from acetate. Part of a complex that catalyzes the reversible cleavage of acetyl-CoA, allowing growth on acetate as sole source of carbon and energy. The alpha-epsilon subcomponent functions as a carbon monoxide dehydrogenase. The precise role of the epsilon subunit is unclear; it may have a stabilizing role within the alpha(2)epsilon(2) component and/or be involved in electron transfer to FAD during a potential FAD-mediated CO oxidation. This chain is Acetyl-CoA decarbonylase/synthase complex subunit epsilon 2 (cdhB2), found in Methanosarcina mazei (strain ATCC BAA-159 / DSM 3647 / Goe1 / Go1 / JCM 11833 / OCM 88) (Methanosarcina frisia).